The following is a 910-amino-acid chain: Epithelial discoidin domain-containing receptor 1 (910 aa).

A signal peptide spans 1 to 19 (MGTGTLSSLLLLLLLVTIG). The Extracellular segment spans residues 22 to 414 (DMKGHFDPAK…VAKAEGSPTA (393 aa)). An F5/8 type C domain is found at 32–186 (CRYALGMQDR…VCLRVELYGC (155 aa)). 2 disulfides stabilise this stretch: Cys-32–Cys-186 and Cys-75–Cys-178. The tract at residues 193–368 (LSYTAPVGQT…LFSEISFISD (176 aa)) is DS-like domain. Residues Asn-212, Gln-231, Asp-234, Val-236, Tyr-254, and Tyr-256 each coordinate Ca(2+). N-linked (GlcNAc...) asparagine glycosylation is present at Asn-212. N-linked (GlcNAc...) asparagine glycosylation occurs at Asn-261. Cysteines 304 and 349 form a disulfide. Ca(2+) contacts are provided by Ser-361 and Glu-362. 2 N-linked (GlcNAc...) asparagine glycosylation sites follow: Asn-371 and Asn-391. A helical membrane pass occupies residues 415 to 435 (ILIGCLVAIILLLLLIIALML). Residues 436–910 (WRLHWRRLLS…FLADDALNTV (475 aa)) are Cytoplasmic-facing. Residues 467-494 (ILINNRPGPREPPPYQEPRPRGTPTHSA) are disordered. The PPxY motif motif lies at 478-481 (PPPY). 3 positions are modified to phosphotyrosine; by autocatalysis: Tyr-481, Tyr-510, and Tyr-517. The Protein kinase domain occupies 607-902 (LRFKEKLGEG…PPFSQLHRFL (296 aa)). ATP is bound by residues 613–621 (LGEGQFGEV) and Lys-652. Residue Tyr-737 is modified to Phosphotyrosine; by autocatalysis. Asp-763 functions as the Proton acceptor in the catalytic mechanism. 3 positions are modified to phosphotyrosine; by autocatalysis: Tyr-789, Tyr-793, and Tyr-794.

The protein belongs to the protein kinase superfamily. Tyr protein kinase family. Insulin receptor subfamily. In terms of assembly, homodimer. Interacts (via PPxY motif) with WWC1 (via WW domains) in a collagen-regulated manner. Forms a tripartite complex with WWC1 and PRKCZ, but predominantly in the absence of collagen. Interacts (tyrosine phosphorylated) with SHC1. Interacts with SRC. Interacts with MYH9. Interacts with CDH1. Interacts with PTPN11. Interacts with NCK2. Autophosphorylated in response to fibrillar collagen binding. Various embryonic and adult tissues; also proliferative zones of the developing brain; hippocampal neurons.

It is found in the cell membrane. The catalysed reaction is L-tyrosyl-[protein] + ATP = O-phospho-L-tyrosyl-[protein] + ADP + H(+). Its function is as follows. Tyrosine kinase that functions as a cell surface receptor for fibrillar collagen and regulates cell attachment to the extracellular matrix, remodeling of the extracellular matrix, cell migration, differentiation, survival and cell proliferation. Collagen binding triggers a signaling pathway that involves SRC and leads to the activation of MAP kinases. Regulates remodeling of the extracellular matrix by up-regulation of the matrix metalloproteinases MMP2, MMP7 and MMP9, and thereby facilitates cell migration and wound healing. Promotes smooth muscle cell migration, and thereby contributes to arterial wound healing. Also plays a role in tumor cell invasion. Phosphorylates PTPN11. Required for normal blastocyst implantation during pregnancy, for normal mammary gland differentiation and normal lactation. Required for normal ear morphology and normal hearing. The polypeptide is Epithelial discoidin domain-containing receptor 1 (Ddr1) (Rattus norvegicus (Rat)).